A 750-amino-acid polypeptide reads, in one-letter code: MIIRSPEPEVKILVDRDPVKTSFEEWAKPGHFSRTIAKGPETTTWIWNLHADAHDFDSHTSDLEEISRKVFSAHFGQLSIIFLWLSGMYFHGARFSNYEAWLSDPTHIGPSAQVVWPIVGQEILNGDVGGGFRGIQITSGFFQLWRASGITSELQLYCTAIGALIFAALMLFAGWFHYHKAAPKLAWFQDVESMLNHHLAGLLGLGSLSWAGHQVHVSLPINQFLNAGVDPKEIPLPHEFILNRDLLAQLYPSFSEGATPFFTLNWSKYAEFLTFRGGLDPVTGGLWLTDIAHHHLAIAILFLIAGHMYRTNWGIGHGLKDILEAHKGPFTGQGHKGLYEILTTSWHAQLSLNLAMLGSLTIIVAHHMYSMPPYPYLATDYGTQLSLFTHHMWIGGFLIVGAAAHAAIFMVRDYDPTTRYNDLLDRVLRHRDAIISHLNWVCIFLGFHSFGLYIHNDTMSALGRPQDMFSDTAIQLQPVFAQWIQNTHALAPGGTAPGATASTSLTWGGVDLVAVGGKVALLPIPLGTADFLVHHIHAFTIHVTVLILLKGVLFARSSRLIPDKANLGFRFPCDGPGRGGTCQVSAWDHVFLGLFWMYNAISVVIFHFSWKMQSDVWGSISDQGVVTHITGGNFAQSSITINGWLRDFLWAQASQVIQSYGSSLSAYGLFFLGAHFVWAFSLMFLFSGRGYWQELIESIVWAHNKLKVAPATQPRALSIVQGRAVGVTHYLLGGIATTWAFFLARIIAVG.

8 helical membrane passes run 70–93 (VFSA…FHGA), 156–179 (LYCT…FHYH), 195–219 (LNHH…HVSL), 291–309 (IAHH…GHMY), 346–369 (WHAQ…HHMY), 385–411 (LSLF…IFMV), 433–455 (AIIS…LYIH), and 531–549 (FLVH…LILL). Cys-573 and Cys-582 together coordinate [4Fe-4S] cluster. The next 2 membrane-spanning stretches (helical) occupy residues 589–610 (HVFL…HFSW) and 664–686 (LSAY…MFLF). His-675 contributes to the chlorophyll a' binding site. 2 residues coordinate chlorophyll a: Met-683 and Tyr-691. Residue Trp-692 coordinates phylloquinone. The chain crosses the membrane as a helical span at residues 724–744 (AVGVTHYLLGGIATTWAFFLA).

This sequence belongs to the PsaA/PsaB family. In terms of assembly, the PsaA/B heterodimer binds the P700 chlorophyll special pair and subsequent electron acceptors. PSI consists of a core antenna complex that captures photons, and an electron transfer chain that converts photonic excitation into a charge separation. The eukaryotic PSI reaction center is composed of at least 11 subunits. The cofactor is P700 is a chlorophyll a/chlorophyll a' dimer, A0 is one or more chlorophyll a, A1 is one or both phylloquinones and FX is a shared 4Fe-4S iron-sulfur center..

It is found in the plastid. It localises to the chloroplast thylakoid membrane. It carries out the reaction reduced [plastocyanin] + hnu + oxidized [2Fe-2S]-[ferredoxin] = oxidized [plastocyanin] + reduced [2Fe-2S]-[ferredoxin]. PsaA and PsaB bind P700, the primary electron donor of photosystem I (PSI), as well as the electron acceptors A0, A1 and FX. PSI is a plastocyanin-ferredoxin oxidoreductase, converting photonic excitation into a charge separation, which transfers an electron from the donor P700 chlorophyll pair to the spectroscopically characterized acceptors A0, A1, FX, FA and FB in turn. Oxidized P700 is reduced on the lumenal side of the thylakoid membrane by plastocyanin. The chain is Photosystem I P700 chlorophyll a apoprotein A1 from Citrus sinensis (Sweet orange).